We begin with the raw amino-acid sequence, 832 residues long: MAGLRYSVKVYVLNEDEEWNNLGTGQVSSTYDEQFQGMSLLVRSDSDGSVILRSQIPPDRPYGKYQETLIVWYEAENQGLVLKFQDPAGCQDIWKEICQAQGKDPSIQTTVNISDEPEEDFNEMSVISNMVVLPDCELNTLDQIADIVTSVFSSPVTDRERLAEILKNEAYIPKLLQLFHTCENLENTEGLHHLYEIIKGILFLNEACLFEIMFSDECIMDVVGCLEYDPALDQPKRHRDFLTNDAKFKEVIPITNSELRQKIHQTYRLQYIYDILLPVPSIFEDNFLSTLTTFIFSNKAEIVSMLQKDHKFLYEVFAQLKDETTHDDRRCELLFFFKELCSFSQALQPQSKDALFETLIQLGVLPALKIVMIRDDLQVRSAAAVICAYLVEYSPSRIREFIISEAHVCKDSDLFINVIIKQMICDTDPELGGAVHLMVVLHTLLDPRNMLTTPEKSERSEFLHFFYKHCMHKFTAPLLAATSEHNCEEDDIAGYDKSKNCPNDNQTAQLLALILELLTFCIQHHTFYIRSYILNKDLLRKALILMNSKHTHLILCVLRFMRRMICLNDEAYNNYIIKGNLFEPVVNALLDNGTRYNMLNSAILELFEYIRVENIKPLVSHIVEKFYNTLESIEYVQTFKGLKIKYEKERDRQSQIQKNLHSVLQNIVVFRGTIEEIGLEEEICFMEDAGEVVMPPLEDDDEFMETKRTQEGEAVMPPLEDDDKFTETKRTHQEGEAVMPPLEDDDEFMETKRNQEHEGKVDSPKRTSSGDFKFSSSYSACAAIGTGSPSGSSVVRLVDHPDDEEEKEEDEEEKEEDKEDETSPKKKPHLSS.

Residues 708 to 832 are disordered; sequence RTQEGEAVMP…SPKKKPHLSS (125 aa). 2 stretches are compositionally biased toward basic and acidic residues: residues 725-735 and 749-765; these read FTETKRTHQEG and METK…DSPK. Low complexity predominate over residues 769 to 779; it reads SGDFKFSSSYS. Positions 801–820 are enriched in acidic residues; sequence PDDEEEKEEDEEEKEEDKED.

This sequence belongs to the SMEK family.

The chain is Protein PPP4R3C from Homo sapiens (Human).